A 150-amino-acid chain; its full sequence is Small ribosomal subunit protein uS13 (150 aa).

The protein belongs to the universal ribosomal protein uS13 family. As to quaternary structure, part of the 30S ribosomal subunit. Forms a loose heterodimer with protein S19. Forms two bridges to the 50S subunit in the 70S ribosome.

Functionally, located at the top of the head of the 30S subunit, it contacts several helices of the 16S rRNA. In the 70S ribosome it contacts the 23S rRNA (bridge B1a) and protein L5 of the 50S subunit (bridge B1b), connecting the 2 subunits; these bridges are implicated in subunit movement. The protein is Small ribosomal subunit protein uS13 of Aeropyrum pernix (strain ATCC 700893 / DSM 11879 / JCM 9820 / NBRC 100138 / K1).